Here is a 400-residue protein sequence, read N- to C-terminus: S-adenosylmethionine synthase (400 aa).

136–141 (GQGSVD) contacts ATP.

This sequence belongs to the AdoMet synthase 2 family. Requires Mg(2+) as cofactor.

The catalysed reaction is L-methionine + ATP + H2O = S-adenosyl-L-methionine + phosphate + diphosphate. The protein operates within amino-acid biosynthesis; S-adenosyl-L-methionine biosynthesis; S-adenosyl-L-methionine from L-methionine: step 1/1. Catalyzes the formation of S-adenosylmethionine from methionine and ATP. The sequence is that of S-adenosylmethionine synthase (mat) from Thermoplasma acidophilum (strain ATCC 25905 / DSM 1728 / JCM 9062 / NBRC 15155 / AMRC-C165).